The sequence spans 1005 residues: Isoleucine--tRNA ligase (1005 aa).

Residues proline 70–histidine 80 carry the 'HIGH' region motif. Residue glutamate 629 participates in L-isoleucyl-5'-AMP binding. The 'KMSKS' region motif lies at lysine 670–serine 674. Lysine 673 lines the ATP pocket.

Belongs to the class-I aminoacyl-tRNA synthetase family. IleS type 1 subfamily. Monomer.

The protein resides in the cytoplasm. It carries out the reaction tRNA(Ile) + L-isoleucine + ATP = L-isoleucyl-tRNA(Ile) + AMP + diphosphate. Functionally, catalyzes the attachment of isoleucine to tRNA(Ile). As IleRS can inadvertently accommodate and process structurally similar amino acids such as valine, to avoid such errors it has two additional distinct tRNA(Ile)-dependent editing activities. One activity is designated as 'pretransfer' editing and involves the hydrolysis of activated Val-AMP. The other activity is designated 'posttransfer' editing and involves deacylation of mischarged Val-tRNA(Ile). This is Isoleucine--tRNA ligase from Rhodopseudomonas palustris (strain ATCC BAA-98 / CGA009).